The chain runs to 264 residues: ATP synthase subunit a (264 aa).

Transmembrane regions (helical) follow at residues 30-50, 90-110, 111-131, 134-154, 177-197, 208-228, and 235-255; these read WNID…WLFY, IAPL…MDMI, PVDW…KVVP, DVNI…YYSI, IPVN…SLAL, LIFI…ALGV, and LIFH…LTIV.

This sequence belongs to the ATPase A chain family. In terms of assembly, F-type ATPases have 2 components, CF(1) - the catalytic core - and CF(0) - the membrane proton channel. CF(1) has five subunits: alpha(3), beta(3), gamma(1), delta(1), epsilon(1). CF(0) has three main subunits: a(1), b(2) and c(9-12). The alpha and beta chains form an alternating ring which encloses part of the gamma chain. CF(1) is attached to CF(0) by a central stalk formed by the gamma and epsilon chains, while a peripheral stalk is formed by the delta and b chains.

It is found in the cell inner membrane. In terms of biological role, key component of the proton channel; it plays a direct role in the translocation of protons across the membrane. In Shewanella frigidimarina (strain NCIMB 400), this protein is ATP synthase subunit a.